A 745-amino-acid chain; its full sequence is Elongation factor G, mitochondrial (745 aa).

The region spanning 40-317 (EKIRNIGISA…AVLDYLPNPG (278 aa)) is the tr-type G domain. GTP contacts are provided by residues 49–56 (AHIDSGKT), 116–120 (DTPGH), and 170–173 (NKLD).

This sequence belongs to the TRAFAC class translation factor GTPase superfamily. Classic translation factor GTPase family. EF-G/EF-2 subfamily.

It is found in the mitochondrion. It functions in the pathway protein biosynthesis; polypeptide chain elongation. In terms of biological role, mitochondrial GTPase that catalyzes the GTP-dependent ribosomal translocation step during translation elongation. During this step, the ribosome changes from the pre-translocational (PRE) to the post-translocational (POST) state as the newly formed A-site-bound peptidyl-tRNA and P-site-bound deacylated tRNA move to the P and E sites, respectively. Catalyzes the coordinated movement of the two tRNA molecules, the mRNA and conformational changes in the ribosome. Essential during development as it acts as a retrograde signal from mitochondria to the nucleus to slow down cell proliferation if mitochondrial energy output is low. In Drosophila willistoni (Fruit fly), this protein is Elongation factor G, mitochondrial.